Reading from the N-terminus, the 319-residue chain is Glycine--tRNA ligase alpha subunit (319 aa).

It belongs to the class-II aminoacyl-tRNA synthetase family. As to quaternary structure, tetramer of two alpha and two beta subunits.

Its subcellular location is the cytoplasm. It carries out the reaction tRNA(Gly) + glycine + ATP = glycyl-tRNA(Gly) + AMP + diphosphate. The sequence is that of Glycine--tRNA ligase alpha subunit from Coxiella burnetii (strain CbuK_Q154) (Coxiella burnetii (strain Q154)).